We begin with the raw amino-acid sequence, 377 residues long: Phosphoserine aminotransferase (377 aa).

Residue Arg43 coordinates L-glutamate. Pyridoxal 5'-phosphate is bound by residues Trp105, Thr164, Asp189, and Gln212. Lys213 is subject to N6-(pyridoxal phosphate)lysine. Residue 254 to 255 (NT) coordinates pyridoxal 5'-phosphate.

Belongs to the class-V pyridoxal-phosphate-dependent aminotransferase family. SerC subfamily. In terms of assembly, homodimer. Requires pyridoxal 5'-phosphate as cofactor.

It is found in the cytoplasm. It carries out the reaction O-phospho-L-serine + 2-oxoglutarate = 3-phosphooxypyruvate + L-glutamate. The enzyme catalyses 4-(phosphooxy)-L-threonine + 2-oxoglutarate = (R)-3-hydroxy-2-oxo-4-phosphooxybutanoate + L-glutamate. It functions in the pathway amino-acid biosynthesis; L-serine biosynthesis; L-serine from 3-phospho-D-glycerate: step 2/3. Its pathway is cofactor biosynthesis; pyridoxine 5'-phosphate biosynthesis; pyridoxine 5'-phosphate from D-erythrose 4-phosphate: step 3/5. Functionally, catalyzes the reversible conversion of 3-phosphohydroxypyruvate to phosphoserine and of 3-hydroxy-2-oxo-4-phosphonooxybutanoate to phosphohydroxythreonine. This chain is Phosphoserine aminotransferase, found in Bordetella bronchiseptica (strain ATCC BAA-588 / NCTC 13252 / RB50) (Alcaligenes bronchisepticus).